The sequence spans 126 residues: Ribosome-binding factor A (126 aa).

It belongs to the RbfA family. In terms of assembly, monomer. Binds 30S ribosomal subunits, but not 50S ribosomal subunits or 70S ribosomes.

The protein localises to the cytoplasm. Its function is as follows. One of several proteins that assist in the late maturation steps of the functional core of the 30S ribosomal subunit. Associates with free 30S ribosomal subunits (but not with 30S subunits that are part of 70S ribosomes or polysomes). Required for efficient processing of 16S rRNA. May interact with the 5'-terminal helix region of 16S rRNA. This Histophilus somni (strain 129Pt) (Haemophilus somnus) protein is Ribosome-binding factor A.